Consider the following 422-residue polypeptide: Serine hydroxymethyltransferase (422 aa).

120–122 (GHI) contacts (6S)-5,6,7,8-tetrahydrofolate. K226 is modified (N6-(pyridoxal phosphate)lysine). Residue E241 coordinates (6S)-5,6,7,8-tetrahydrofolate.

Belongs to the SHMT family. In terms of assembly, homodimer. The cofactor is pyridoxal 5'-phosphate.

Its subcellular location is the cytoplasm. It carries out the reaction 5,10-methylenetetrahydromethanopterin + glycine + H2O = 5,6,7,8-tetrahydromethanopterin + L-serine. Its pathway is amino-acid biosynthesis; glycine biosynthesis; glycine from L-serine: step 1/1. Catalyzes the reversible interconversion of serine and glycine with tetrahydromethanopterin (H4MPT) serving as the one-carbon carrier. Also exhibits a pteridine-independent aldolase activity toward beta-hydroxyamino acids, producing glycine and aldehydes, via a retro-aldol mechanism. The polypeptide is Serine hydroxymethyltransferase (Methanosphaera stadtmanae (strain ATCC 43021 / DSM 3091 / JCM 11832 / MCB-3)).